The sequence spans 223 residues: MSHFFITASGTEIGKTHVAAGMIRHWRAGDVPARALKPVASGYQPALSASSDAGILLRAMGSSMVNDEAVATICPWRFPDPISPDMAAARSGRRIPFDDLVAFCQAEIVGAAGPMLVEGVGGAMVPLDETHTVRDWIAALGIEVVLVAGGYLGTISHTLCAVEALRARGIAIAAVVINPMEPLPVPVERTRESLLRHLGATPPPVFIDDTPDWHAWLDEAARR.

ATP is bound at residue 12-17 (EIGKTH). Residue Thr-16 participates in Mg(2+) binding. The active site involves Lys-37. Substrate is bound at residue Ser-41. ATP contacts are provided by residues Asp-52 and 118–121 (EGVG). Asp-52 and Glu-118 together coordinate Mg(2+).

The protein belongs to the dethiobiotin synthetase family. In terms of assembly, homodimer. Requires Mg(2+) as cofactor.

Its subcellular location is the cytoplasm. It carries out the reaction (7R,8S)-7,8-diammoniononanoate + CO2 + ATP = (4R,5S)-dethiobiotin + ADP + phosphate + 3 H(+). Its pathway is cofactor biosynthesis; biotin biosynthesis; biotin from 7,8-diaminononanoate: step 1/2. Functionally, catalyzes a mechanistically unusual reaction, the ATP-dependent insertion of CO2 between the N7 and N8 nitrogen atoms of 7,8-diaminopelargonic acid (DAPA, also called 7,8-diammoniononanoate) to form a ureido ring. This is ATP-dependent dethiobiotin synthetase BioD from Acidiphilium cryptum (strain JF-5).